The primary structure comprises 271 residues: ELH (271 aa).

An N-terminal signal peptide occupies residues 1–28; the sequence is MKRPNNRPTNTMSLILCLTLSSLCVSSQ. 2 propeptides span residues 29–95 and 162–184; these read SASV…NEKR and AAGG…RRKR. Residues 162–190 are disordered; sequence AAGGMEQSEGQNPETESHSRRKRSVLTPS. Lysine 241 is modified (lysine amide).

It belongs to the molluscan ELH family. As to expression, bag cell neurons.

It is found in the secreted. Its function is as follows. ELH acts as a neurotransmitter locally, upon neurons of the abdominal ganglion and as a hormone by diffusing into the circulating hemolymph and modulating the activity of other organs. It specifically causes contraction of smooth muscle in the ovotestis and expulsion of the egg string. Alpha-BCP decreases the activity of a cluster of neurons in the left upper quadrant of the abdominal ganglion. In terms of biological role, beta-BCP specifically excites 2 neurons, L1 and R1, in the abdominal ganglion. In Aplysia californica (California sea hare), this protein is ELH.